Reading from the N-terminus, the 109-residue chain is Iron-sulfur cluster assembly protein CyaY (109 aa).

This sequence belongs to the frataxin family.

Functionally, involved in iron-sulfur (Fe-S) cluster assembly. May act as a regulator of Fe-S biogenesis. This is Iron-sulfur cluster assembly protein CyaY from Verminephrobacter eiseniae (strain EF01-2).